The following is a 298-amino-acid chain: N-acetylmuramic acid 6-phosphate etherase (298 aa).

The SIS domain occupies 55–218 (IHAQVSGGGR…STGLMIKSGK (164 aa)). E83 acts as the Proton donor in catalysis. E114 is a catalytic residue.

The protein belongs to the GCKR-like family. MurNAc-6-P etherase subfamily. Homodimer.

The enzyme catalyses N-acetyl-D-muramate 6-phosphate + H2O = N-acetyl-D-glucosamine 6-phosphate + (R)-lactate. It functions in the pathway amino-sugar metabolism; 1,6-anhydro-N-acetylmuramate degradation. Its pathway is amino-sugar metabolism; N-acetylmuramate degradation. The protein operates within cell wall biogenesis; peptidoglycan recycling. Functionally, specifically catalyzes the cleavage of the D-lactyl ether substituent of MurNAc 6-phosphate, producing GlcNAc 6-phosphate and D-lactate. Together with AnmK, is also required for the utilization of anhydro-N-acetylmuramic acid (anhMurNAc) either imported from the medium or derived from its own cell wall murein, and thus plays a role in cell wall recycling. The polypeptide is N-acetylmuramic acid 6-phosphate etherase (Escherichia coli O81 (strain ED1a)).